The primary structure comprises 266 residues: UPF0328 protein ECU05_1610/ECU11_0120 (266 aa).

Belongs to the UPF0328 family.

This chain is UPF0328 protein ECU05_1610/ECU11_0120, found in Encephalitozoon cuniculi (strain GB-M1) (Microsporidian parasite).